Reading from the N-terminus, the 161-residue chain is N5-carboxyaminoimidazole ribonucleotide mutase (161 aa).

S9, D12, and R39 together coordinate substrate.

It belongs to the AIR carboxylase family. Class I subfamily.

The catalysed reaction is 5-carboxyamino-1-(5-phospho-D-ribosyl)imidazole + H(+) = 5-amino-1-(5-phospho-D-ribosyl)imidazole-4-carboxylate. Its pathway is purine metabolism; IMP biosynthesis via de novo pathway; 5-amino-1-(5-phospho-D-ribosyl)imidazole-4-carboxylate from 5-amino-1-(5-phospho-D-ribosyl)imidazole (N5-CAIR route): step 2/2. Catalyzes the conversion of N5-carboxyaminoimidazole ribonucleotide (N5-CAIR) to 4-carboxy-5-aminoimidazole ribonucleotide (CAIR). The protein is N5-carboxyaminoimidazole ribonucleotide mutase of Aliivibrio fischeri (strain ATCC 700601 / ES114) (Vibrio fischeri).